Reading from the N-terminus, the 231-residue chain is Modulator of macroautophagy TMEM150B-B (231 aa).

Residue Met-1 is a topological domain, cytoplasmic. A helical transmembrane segment spans residues 2–22 (WAWALLPICLTVWATGGIWIV). Residues 23 to 50 (YAMSVSNGSVNLSDGFPYISVSGTYPPQ) are Extracellular-facing. N-linked (GlcNAc...) asparagine glycosylation is found at Asn-29 and Asn-33. A helical membrane pass occupies residues 51-71 (SCVFGQVLNVGAMLAVWISVI). Residues 72 to 83 (RFQQIRDYNCHS) lie on the Cytoplasmic side of the membrane. The chain crosses the membrane as a helical span at residues 84-104 (VLNSVSLATGILCALGTSIVG). The Extracellular segment spans residues 105-115 (NFQQSNQLQTH). The chain crosses the membrane as a helical span at residues 116–136 (LAGAFLAFIIGNVYFWMQTAL). Over 137 to 150 (TYMVKPKHGGCYIG) the chain is Cytoplasmic. A helical transmembrane segment spans residues 151–171 (PIRFCLSIACTALIVAMAVFL). Residues 172–183 (KMNMKSVSAICE) lie on the Extracellular side of the membrane. A helical transmembrane segment spans residues 184–204 (WIVAMILFLLYGLFAVDFWHL). At 205–231 (DGHFFHVKKRRTVIPNEMEVSTVTLSI) the chain is on the cytoplasmic side.

Belongs to the DRAM/TMEM150 family.

It localises to the cell membrane. The protein resides in the endosome membrane. Its subcellular location is the cytoplasmic vesicle. It is found in the autophagosome membrane. Functionally, modulator of macroautophagy that causes accumulation of autophagosomes under basal conditions and enhances autophagic flux. Represses cell death and promotes long-term clonogenic survival of cells grown in the absence of glucose in a macroautophagy-independent manner. May have some role in extracellular matrix engulfment or growth factor receptor recycling, both of which can modulate cell survival. The protein is Modulator of macroautophagy TMEM150B-B of Xenopus laevis (African clawed frog).